Consider the following 340-residue polypeptide: tRNA N6-adenosine threonylcarbamoyltransferase (340 aa).

Fe cation is bound by residues H115 and H119. Residues 137-141 (IVSGG), D170, G183, D187, and N276 contribute to the substrate site. D304 contacts Fe cation.

This sequence belongs to the KAE1 / TsaD family. The cofactor is Fe(2+).

It is found in the cytoplasm. The catalysed reaction is L-threonylcarbamoyladenylate + adenosine(37) in tRNA = N(6)-L-threonylcarbamoyladenosine(37) in tRNA + AMP + H(+). In terms of biological role, required for the formation of a threonylcarbamoyl group on adenosine at position 37 (t(6)A37) in tRNAs that read codons beginning with adenine. Is involved in the transfer of the threonylcarbamoyl moiety of threonylcarbamoyl-AMP (TC-AMP) to the N6 group of A37, together with TsaE and TsaB. TsaD likely plays a direct catalytic role in this reaction. The sequence is that of tRNA N6-adenosine threonylcarbamoyltransferase from Staphylococcus epidermidis (strain ATCC 35984 / DSM 28319 / BCRC 17069 / CCUG 31568 / BM 3577 / RP62A).